Here is a 220-residue protein sequence, read N- to C-terminus: Probable nicotinate-nucleotide adenylyltransferase (220 aa).

This sequence belongs to the NadD family.

It carries out the reaction nicotinate beta-D-ribonucleotide + ATP + H(+) = deamido-NAD(+) + diphosphate. The protein operates within cofactor biosynthesis; NAD(+) biosynthesis; deamido-NAD(+) from nicotinate D-ribonucleotide: step 1/1. In terms of biological role, catalyzes the reversible adenylation of nicotinate mononucleotide (NaMN) to nicotinic acid adenine dinucleotide (NaAD). The chain is Probable nicotinate-nucleotide adenylyltransferase from Saccharophagus degradans (strain 2-40 / ATCC 43961 / DSM 17024).